A 309-amino-acid polypeptide reads, in one-letter code: tRNA dimethylallyltransferase (309 aa).

15 to 22 (GPTASGKS) serves as a coordination point for ATP. Substrate is bound at residue 17–22 (TASGKS). The segment at 40 to 43 (DSRQ) is interaction with substrate tRNA.

The protein belongs to the IPP transferase family. As to quaternary structure, monomer. The cofactor is Mg(2+).

It catalyses the reaction adenosine(37) in tRNA + dimethylallyl diphosphate = N(6)-dimethylallyladenosine(37) in tRNA + diphosphate. In terms of biological role, catalyzes the transfer of a dimethylallyl group onto the adenine at position 37 in tRNAs that read codons beginning with uridine, leading to the formation of N6-(dimethylallyl)adenosine (i(6)A). In Chlorobium phaeovibrioides (strain DSM 265 / 1930) (Prosthecochloris vibrioformis (strain DSM 265)), this protein is tRNA dimethylallyltransferase.